Reading from the N-terminus, the 619-residue chain is Mitogen-activated protein kinase kinase kinase 2 (619 aa).

Disordered stretches follow at residues 25–44 (LSLQ…QNDV), 126–168 (QATN…PPPG), 201–245 (LDPL…DNHQ), and 289–355 (RTQG…APTN). Ser26 is subject to Phosphoserine. The region spanning 43–122 (DVRVKFEHRG…KSLKILLVVN (80 aa)) is the PB1 domain. The span at 126 to 143 (QATNLEPSPSPEDLNNTP) shows a compositional bias: polar residues. Residues Ser153 and Ser164 each carry the phosphoserine modification. Residues 203-219 (PLSLSSPENSGSGSCPS) show a composition bias toward low complexity. Phosphoserine is present on residues Ser239, Ser297, Ser311, Ser331, Ser344, and Ser349. Over residues 290 to 299 (TQGTSFRSPV) the composition is skewed to polar residues. A compositionally biased stretch (low complexity) spans 300 to 315 (SFSPTDHSLSTSSGSS). Residues 322-332 (DDSRIRRRGSD) show a composition bias toward basic and acidic residues. Residues 336-346 (PTLTVTDISPP) show a composition bias toward polar residues. Residues 356–616 (WRLGKLLGQG…AEELLRHMFV (261 aa)) enclose the Protein kinase domain. ATP is bound by residues 362-370 (LGQGAFGRV) and Lys385. Asp483 (proton acceptor) is an active-site residue.

Belongs to the protein kinase superfamily. STE Ser/Thr protein kinase family. MAP kinase kinase kinase subfamily. In terms of assembly, self-associates. Binds both upstream activators and downstream substrates in multimolecular complexes. Interacts (via the kinase catalytic domain) with STK38. Interacts with XIAP/BIRC4. Requires Mg(2+) as cofactor. In terms of processing, ubiquitination by XIAP/BIRC4 does not lead to proteasomal degradation. Autophosphorylated.

The protein localises to the cytoplasm. The protein resides in the nucleus. The catalysed reaction is L-seryl-[protein] + ATP = O-phospho-L-seryl-[protein] + ADP + H(+). The enzyme catalyses L-threonyl-[protein] + ATP = O-phospho-L-threonyl-[protein] + ADP + H(+). With respect to regulation, activated by phosphorylation on Thr-524. Interacts with PKN2; the interaction activates PKN2 kinase activity in a MAP3K2-independent kinase activity. In terms of biological role, component of a protein kinase signal transduction cascade. Regulates the JNK and ERK5 pathways by phosphorylating and activating MAP2K5 and MAP2K7. Plays a role in caveolae kiss-and-run dynamics. The protein is Mitogen-activated protein kinase kinase kinase 2 (Map3k2) of Mus musculus (Mouse).